The sequence spans 1022 residues: MALAIKKRVGTYVETVDGSPPVKKLRLQTLAADAKGGKSGKVGNVERKLTALNQLDAYVGNLPAGALVLPTGTPVASTGAPSTGVIGNPPAAATGAPPMTAANSRELLELLVKITDEISYEDVEMGELKEVASKIFQLYQLQERDSDTSIRVKLLELLSGLGCECATEQALTMIIDYFIFLLRKEVSQKVLAQGMMCLFRIGERRKHMLPISYKTQVAHLAKEQLRSGSAHTQKNAMLVIGRFATKMEGERHYVWKLAFYIDSQDSSVRAQALHALLTLGERGSQLPAVLYKRAVEAMKDDYECVRKEALQLVFMLGNRHPDYILPSDRQQEELRMIDAAFSKVCEALCDLSLQIRVLAAELLGGMTAVSREFLHQTLDKKLMSNLRRKRTAHERGARLVASGEWSSGKRWADDAPQEHLDAQSISIIASGACGALIHGLEDEFLEVRTAAVASMCKLALSRPDFAVTSLDFLVDMFNDEIEDVRLKAIYSLTAIAKHIVLREDQLEIMLGSLEDYSVDVREGLHLMLGACRVSTQTCLLMVVQKLLDVLAKYPQDRNSTYACMRKIGQKHPHLVMAVAVHLLYVHPFFETPERDVEDPAYLCVLILVFNAAEHLVPIISLLPTATHRHYAYLRDSMPNLVPQLPIEGASSASATHRIDSAMHQAGSSAEYLQMILSHIEEIFTMTDERLELLQTAQSNLQRLGSIDAGMYGTSNFLETFLAAQIQIEQMQRCASTQRSRVPLKESLAALIRNCLKLQHTFSGLNYGDILQVKQLRLRACALHLVLVVRDRSQSALGPCQMLLQTAGDISEFIKANTKDEEEKPPVVETDMPMKESVSRDAQPDSFTRQLLIKLDGISDPKPGRVFREILPLVQQAPPLALPPANDKIRRCVANILEPCPLQSQDNVIKVTAGLIAAVPFVAEIDNLLESQKADMRIKIKYPDQHMHTVVPKQSDFKPIMTEQGEHKTNVRLRTTILLSHSVWTESSLVEIQLCLAVRPGSELELCKPAKVLFAPKPVRRGI.

Positions 148 and 184 each coordinate 1D-myo-inositol hexakisphosphate. The segment at 818–840 is disordered; sequence KDEEEKPPVVETDMPMKESVSRD.

It belongs to the Integrator subunit 4 family. In terms of assembly, belongs to the multiprotein complex Integrator, at least composed of IntS1, IntS2, IntS3, IntS4, omd/IntS5, IntS6, defl/IntS7, IntS8, IntS9, IntS10, IntS11, IntS12, asun/IntS13, IntS14 and IntS15. The core complex associates with protein phosphatase 2A subunits mts/PP2A and Pp2A-29B, to form the Integrator-PP2A (INTAC) complex. IntS4 is part of the RNA endonuclease subcomplex, composed of IntS4, IntS9, IntS11 and inositol hexakisphosphate (InsP6).

It localises to the nucleus. Its function is as follows. Component of the integrator complex, a multiprotein complex that terminates RNA polymerase II (Pol II) transcription in the promoter-proximal region of genes. The integrator complex provides a quality checkpoint during transcription elongation by driving premature transcription termination of transcripts that are unfavorably configured for transcriptional elongation: the complex terminates transcription by (1) catalyzing dephosphorylation of the C-terminal domain (CTD) of Pol II subunit Polr2A/Rbp1 and Spt5, and (2) degrading the exiting nascent RNA transcript via endonuclease activity. The integrator complex is also involved in the 3'-end processing of the U7 snRNA, and also the spliceosomal snRNAs U1, U2, U4 and U5. This Drosophila melanogaster (Fruit fly) protein is Integrator complex subunit 4.